The following is a 710-amino-acid chain: MRYIVSPQLVLQVGKGQEVERALYLTPYDYIDEKSPIYYFLRSHLNIQRPEIVKRHILLTLRMTQLKGYLGNLLDIKDDIIIYSHKNNLEYSYVDNTIFNPFVYTQKKTLLKNDSFLYNVYSGACDFLVIWVARACDTSIPEFGSYEDVDNNIIKFETMLMEVFPQLDLDITVESKFNNIFRTNLKLTGLKKIIQRVQDLDINYKSLLSRYDEHFINMTGNHFILNDEQLNLSIWDLDSTLALSSDGDTVMINNVKLFTDLVSDIDTQMERIKGDITYKVHLATPINSRIKLDIETSFIFIETATNNILLSSDKKISIILAKNHISIKVKNHIPNIEKYFTFLVIAINAMFNSVQKSSDFTKVETVYWSRICQNTKNKNRKPIIINYLDPGMKKISNNFYRSDEKEVFINDNGIMFTCIDPLGKYNKVGFLNIFHDMRKYCIPCCFLHDQSHRSTFSSCVHQIDVEKKIVSPYILNFGKVVTESKMSFLPIIFDAFLNDGMTANMEQDNKRLKETSGYHIVRCCAGDDIVRLRTISDIIQFVNEDKNILIVNDMIYFPMNATDIGKKIHILIQEIVHEVMIVKKKESSDKIDFFPPNYKLLKDLFPKQTIQTPIHSDAGMVLTTDGFYIDGKLFNEDLSSKYVTFTKNVIASDAVTKYFSPLFKYVISEAKDRFIKTWMINIMIHMNVDPNNIIPTLEKYYPNSGRAQIN.

The protein belongs to the poxviridae VETF large subunit family. Heterodimer of a 70 kDa and a 82 kDa subunit. Part of the early transcription complex composed of ETF, RAP94/OPG109, and the DNA-directed RNA polymerase.

It is found in the virion. Acts with RNA polymerase to initiate transcription from early gene promoters. Is recruited by the RPO-associated protein of 94 kDa RAP94/OPG109 to form the early transcription complex, which also contains the core RNA polymerase. ETF heterodimer binds to early gene promoters. The sequence is that of Early transcription factor 82 kDa subunit (OPG133) from Monkeypox virus.